The chain runs to 301 residues: F-box protein At4g02733 (301 aa).

In terms of domain architecture, F-box spans 91 to 146 (NSISWFLPSELTVKVFSMVDTKSLMQASACCTMFNNCAMDPLCYFHIDLTKAFKHV).

In Arabidopsis thaliana (Mouse-ear cress), this protein is F-box protein At4g02733.